Reading from the N-terminus, the 516-residue chain is 4-hydroxybenzoate brominase (decarboxylating) (516 aa).

Residues Ser-13, Glu-32, Val-40, Phe-41, His-51, Val-102, and Gln-365 each coordinate FAD.

This sequence belongs to the FMO family. FAD is required as a cofactor.

It catalyses the reaction 2 bromide + 4-hydroxybenzoate + 2 NADPH + 2 O2 + 5 H(+) = 2,4-dibromophenol + CO2 + 2 NADP(+) + 4 H2O. The enzyme catalyses bromide + 4-hydroxybenzoate + NADPH + O2 + 2 H(+) = 3-bromo-4-hydroxybenzoate + NADP(+) + 2 H2O. It carries out the reaction 3-bromo-4-hydroxybenzoate + bromide + NADPH + O2 + 3 H(+) = 2,4-dibromophenol + CO2 + NADP(+) + 2 H2O. The catalysed reaction is 3,4-dihydroxybenzoate + 2 bromide + 2 NADPH + 2 O2 + 5 H(+) = 3,5-dibromobenzene-1,2-diol + CO2 + 2 NADP(+) + 4 H2O. It catalyses the reaction 3,4-dihydroxybenzoate + bromide + NADPH + O2 + 2 H(+) = 3-bromo-4,5-dihydroxybenzoate + NADP(+) + 2 H2O. The enzyme catalyses 3-bromo-4,5-dihydroxybenzoate + bromide + NADPH + O2 + 3 H(+) = 3,5-dibromobenzene-1,2-diol + CO2 + NADP(+) + 2 H2O. Functionally, brominase involved in the biosynthesis of polybrominated aromatic organic compounds. Catalyzes the bromination of 4-hydroxybenzoate (4-HBA) to 3-bromo-4-hydroxybenzoate, followed by bromination and decarboxylation of 3-bromo-4-hydroxybenzoate to 2,4-dibromophenol. Can also use 3,4-dihydroxybenzoate, with lower efficiency, forming 3-bromo-4,5-dihydroxybenzoate and 3,5-dibromobenzene-1,2-diol. This is 4-hydroxybenzoate brominase (decarboxylating) from Marinomonas mediterranea (strain ATCC 700492 / JCM 21426 / NBRC 103028 / MMB-1).